A 186-amino-acid polypeptide reads, in one-letter code: Ribosome-recycling factor (186 aa).

The protein belongs to the RRF family.

The protein resides in the cytoplasm. In terms of biological role, responsible for the release of ribosomes from messenger RNA at the termination of protein biosynthesis. May increase the efficiency of translation by recycling ribosomes from one round of translation to another. The sequence is that of Ribosome-recycling factor from Janthinobacterium sp. (strain Marseille) (Minibacterium massiliensis).